The chain runs to 464 residues: Sensor protein IrlS (464 aa).

The Periplasmic segment spans residues 1–13 (MIRRLLPRTLRAR). A helical membrane pass occupies residues 14–34 (LTALIILSTAATLALSGVALY). Over 35–166 (SALHNRLVGM…DHALLRAYAY (132 aa)) the chain is Cytoplasmic. A helical transmembrane segment spans residues 167-187 (TVVVIEVLAVVLTAALAYGIA). Positions 188–241 (MLGLSPLRRLVARAEQMSSSRLAQPLPELDTSGELKEMEHAFNAMLKRLDESFV) constitute an HAMP domain. Residues 188–464 (MLGLSPLRRL…FWLKFPAHAA (277 aa)) are Periplasmic-facing. In terms of domain architecture, Histidine kinase spans 249–463 (NLAHDMRTPL…TFWLKFPAHA (215 aa)). H252 carries the post-translational modification Phosphohistidine; by autocatalysis.

It is found in the cell inner membrane. The enzyme catalyses ATP + protein L-histidine = ADP + protein N-phospho-L-histidine.. In terms of biological role, member of the two-component regulatory system IrlR/IrlS. May be involved in invasion of eukaryotic cells and heavy-metal resistance. Probably activates IrlR by phosphorylation. The chain is Sensor protein IrlS (irlS) from Burkholderia pseudomallei (strain K96243).